We begin with the raw amino-acid sequence, 108 residues long: MFEGFDLSKMNEMLGDLQKKAQQMENENANREFSVKSGAGMVEIKISGKGEVLDVSIDDSLMSDKDSLQILLISAINDAVKLIDNEKKNLAAKMLGDIGNLGGFGCEK.

Belongs to the YbaB/EbfC family. In terms of assembly, homodimer.

The protein localises to the cytoplasm. Its subcellular location is the nucleoid. In terms of biological role, binds to DNA and alters its conformation. May be involved in regulation of gene expression, nucleoid organization and DNA protection. The chain is Nucleoid-associated protein CHAB381_0200 from Campylobacter hominis (strain ATCC BAA-381 / DSM 21671 / CCUG 45161 / LMG 19568 / NCTC 13146 / CH001A).